A 1333-amino-acid chain; its full sequence is Vascular endothelial growth factor receptor 1 (1333 aa).

The N-terminal stretch at Met-1 to Gly-22 is a signal peptide. Over Tyr-23–Glu-759 the chain is Extracellular. 7 consecutive Ig-like C2-type domains span residues Pro-32–Ser-124, Gly-152–His-215, Leu-231–His-328, Phe-334–Pro-429, Gln-430–Lys-550, Pro-557–Val-656, and Pro-662–Thr-748. 2 disulfide bridges follow: Cys-53-Cys-108 and Cys-159-Cys-208. Residues Asn-101, Asn-165, Asn-197, and Asn-252 are each glycosylated (N-linked (GlcNAc...) asparagine). A disulfide bond links Cys-253 and Cys-312. Asn-324, Asn-418, Asn-475, Asn-517, Asn-598, Asn-626, Asn-667, and Asn-714 each carry an N-linked (GlcNAc...) asparagine glycan. Disulfide bonds link Cys-455/Cys-536 and Cys-578/Cys-637. Residues Cys-683 and Cys-732 are joined by a disulfide bond. A helical membrane pass occupies residues Leu-760–Ile-781. Over Arg-782–Ala-1333 the chain is Cytoplasmic. One can recognise a Protein kinase domain in the interval Leu-828–Leu-1158. Residues Leu-834–Val-842 and Lys-862 each bind ATP. Tyr-915 is modified (phosphotyrosine; by autocatalysis). The tract at residues Glu-947–Asp-983 is disordered. Residues Ser-960–Ser-970 show a composition bias toward low complexity. Residue Asp-1022 is the Proton acceptor of the active site. 6 positions are modified to phosphotyrosine; by autocatalysis: Tyr-1053, Tyr-1169, Tyr-1213, Tyr-1242, Tyr-1322, and Tyr-1328.

Belongs to the protein kinase superfamily. Tyr protein kinase family. CSF-1/PDGF receptor subfamily. Interacts with VEGFA, VEGFB and PGF. Monomer in the absence of bound VEGFA, VEGFB or PGF. Homodimer in the presence of bound VEGFA, VEGFB and PGF. Can also form a heterodimer with KDR. Interacts (tyrosine phosphorylated) with CBL, CRK, GRB2, NCK1, PIK3R1, PLCG, PSEN1 and PTPN11. Probably interacts with PTPRB. Interacts with RACK1. Identified in a complex with CBL and CD2AP. N-glycosylated. Post-translationally, ubiquitinated after VEGFA-mediated autophosphorylation, leading to proteolytic degradation. In terms of processing, autophosphorylated on tyrosine residues upon ligand binding. Autophosphorylation occurs in trans, i.e. one subunit of the dimeric receptor phosphorylates tyrosine residues on the other subunit. Phosphorylation at Tyr-1169 is important for interaction with PLCG. Phosphorylation at Tyr-1213 is important for interaction with PIK3R1, PTPN11, GRB2, and PLCG. Phosphorylation at Tyr-1328 is important for endocytosis and for interaction with CBL, NCK1 and CRK. Is probably dephosphorylated by PTPRB.

It is found in the cell membrane. The protein resides in the endosome. The enzyme catalyses L-tyrosyl-[protein] + ATP = O-phospho-L-tyrosyl-[protein] + ADP + H(+). Present in an inactive conformation in the absence of bound ligand. Binding of VEGFA, VEGFB or PGF leads to dimerization and activation by autophosphorylation on tyrosine residues. In terms of biological role, tyrosine-protein kinase that acts as a cell-surface receptor for VEGFA, VEGFB and PGF, and plays an essential role in the development of embryonic vasculature, the regulation of angiogenesis, cell survival, cell migration, macrophage function, chemotaxis, and cancer cell invasion. Acts as a positive regulator of postnatal retinal hyaloid vessel regression. May play an essential role as a negative regulator of embryonic angiogenesis by inhibiting excessive proliferation of endothelial cells. Can promote endothelial cell proliferation, survival and angiogenesis in adulthood. Its function in promoting cell proliferation seems to be cell-type specific. Promotes PGF-mediated proliferation of endothelial cells, and proliferation of some types of cancer cells, but does not promote proliferation of normal fibroblasts. Has very high affinity for VEGFA and relatively low protein kinase activity; may function as a negative regulator of VEGFA signaling by limiting the amount of free VEGFA and preventing its binding to KDR. Modulates KDR signaling by forming heterodimers with KDR. Ligand binding leads to the activation of several signaling cascades. Activation of PLCG leads to the production of the cellular signaling molecules diacylglycerol and inositol 1,4,5-trisphosphate and the activation of protein kinase C. Mediates phosphorylation of PIK3R1, the regulatory subunit of phosphatidylinositol 3-kinase, leading to the activation of phosphatidylinositol kinase and the downstream signaling pathway. Mediates activation of MAPK1/ERK2, MAPK3/ERK1 and the MAP kinase signaling pathway, as well as of the AKT1 signaling pathway. Phosphorylates SRC, YES1 and PLCG, and may also phosphorylate CBL. Promotes phosphorylation of AKT1 and PTK2/FAK1. This is Vascular endothelial growth factor receptor 1 (Flt1) from Mus musculus (Mouse).